A 74-amino-acid polypeptide reads, in one-letter code: U4-theraphotoxin-Cg1a (74 aa).

Residues 1–19 (MNATIFALLLLLNLAMYNA) form the signal peptide. Positions 20–39 (AEQSSETDMDDTLLIPEINR) are excised as a propeptide. 3 disulfide bridges follow: Cys-42–Cys-56, Cys-49–Cys-61, and Cys-55–Cys-71.

This sequence belongs to the neurotoxin 36 family. 01 subfamily. Expressed by the venom gland.

Its subcellular location is the secreted. Its function is as follows. Probable ion channel inhibitor. The chain is U4-theraphotoxin-Cg1a from Chilobrachys guangxiensis (Chinese earth tiger tarantula).